The sequence spans 542 residues: Malolactic enzyme (542 aa).

Tyr92 (proton donor) is an active-site residue. Lys165 functions as the Proton acceptor in the catalytic mechanism. Lys165 is a substrate binding site. Positions 236, 237, and 260 each coordinate Mn(2+). NAD(+) contacts are provided by residues 293–296, Asn405, and Asn450; that span reads AGTA. Residue Asn450 participates in substrate binding.

This sequence belongs to the malic enzymes family. Homodimer. The cofactor is Mn(2+). Requires NAD(+) as cofactor.

The catalysed reaction is (S)-malate + H(+) = (S)-lactate + CO2. Its activity is regulated as follows. Oxamate, fructose-1,6-diphosphate and L-lactate act as non-competitive inhibitors, whereas succinate, citrate and tartrate isomers produce a competitive inhibition. In terms of biological role, involved in the malolactic fermentation (MLF) of wine, which results in a natural decrease in acidity and favorable changes in wine flavors. Catalyzes the decarboxylation of L-malate to L-lactate. The protein is Malolactic enzyme (mleS) of Leuconostoc mesenteroides.